The primary structure comprises 778 residues: MSEHVMVLGKGNKGISKNSSVNPYESAWLGRWTQSGSEVKFHDGETNCSKQLIRPEDENHGVEVLPFPMFKVSQKRETTTTTTTKPSFHEDVGSSSRAMVNRMPWMYPQGENFSSSNRLDFPIQEKTTQNLLELIRPVRIYATVDSVNLPKEDSHQLLKGSTVSMKLKGKIFGGYLDLFPNQDHSHNRGGVRLQSLESSKDTQEDGPRKNESSAETNTLEMDRLQTIHLSGSISSSSTKGKGIKGYSAIPRTEIPDMNEEPPLVPDRENSVDGHQGETSNSATQSMNVEHFLSRDCKRVRLEPEVEASSRWVKRLKTSPSDSSETKSMMKMKEASLGEKENNNLFLEILKSGINNLQPRNQEPVVSQSNDLRQGGDDITLLHPWIQRWCKKKTTSTDQPTGQEASFEPESHKEFEKKQYPSIAAMALMGKALSGLNPYGLRKTNSLMVWNARDLSFTYRSLRWNLTMADWPLLPNDLLELIMGHLETSFEIFLFRSVCSSWRSVVPPLDHSRCLGIKTHDISFNVGFSFNGRPTNEYCTLKKIPIYLVKFWTPFGDDYLLAEMRERNDGEPKLLLSPLSSNGIKYGMGINKVLFNSLTSPIIPFGQYYEITYIEKRPSEYRFGFPYKLEWVEITERVEFLKLDSEDSRDFAVLFAGRMCNLVMYRSRNMSWTQVVEHPEKYAYQDLVAFKGKFYAVDSSGRGRVFVVELSFEVTEIPSVGGSQQSSKESLVQSGEELLLVQRFTPVGRRYDEYIYIHGSECLDLMKKEERESGFKLMT.

Disordered regions lie at residues Gln74–Ser95, His186–Thr283, and Lys316–Ser335. Residues Ser198 to Ser212 are compositionally biased toward basic and acidic residues. Positions Ser230–Ser247 are enriched in low complexity. The segment covering Pro265–Gln275 has biased composition (basic and acidic residues). Residues Thr317–Lys326 show a composition bias toward polar residues. One can recognise an F-box domain in the interval Trp470–Val505.

As to quaternary structure, interacts with light-activated phyB. Binds directly to PIF1 and COP1. Ubiquitinated by COP1 in darkness; this leads to proteasomal degradation. In terms of tissue distribution, mainly expressed in cotyledons, hypocotyls, leaves and roots.

It is found in the nucleus. Together with PCHL, regulates growth and development adaptation to the ambient environment by controlling negatively phytochrome B (phyB) dark reversion, a temperature-dependent thermal relaxation process during which phyB reverts from the active to the inactive state. Contributes to red (R) light-triggered photomorphogenesis. Promotes various light responses such as seed germination, hypocotyl gravitropism and chlorophyll biosynthesis, via direct interaction with PIF1 and COP1. Prevents DNA-binding ability of PIF1 to negatively regulate the expressions of its target genes. Facilitates the physical interaction between phyB and PIF1 and the subsequent light-induced degradation of PIF1. The sequence is that of Protein PHOTOPERIODIC CONTROL OF HYPOCOTYL 1 from Arabidopsis thaliana (Mouse-ear cress).